We begin with the raw amino-acid sequence, 531 residues long: MDRSMFEIDHKKDEQLVSVEGYCKPGSDLIQGVQFKTNLRISEIIGFEKAIFGNPTTFSLAEDGKKIIGFHGYSMANLNSLGAYFTWISPTKMEAKGGKGGTEWNDGAEHEGFTKIYVQGGCDGIQYIKFDYVKDGQHKYGSPHGVKGSESTEPFEINHLDKEYLISVEGYYDEGDSGVIQGIQFKTNIKTSELIGDKKGRKFSLAANGKKIIGFHGYADKNLNSLGAYFTTSPLISLEHTTGSDLVNHIWDDGSFEGVRKVYVRYDSLEICYVEFDYDNKGKVEKREHGMFYSWVQQGEFVVDYPNEFITSVEGTMRTESFMQVASLTFKTSKGRTSSTFGSPSDSKFLLESKGCGVVGFYGRCFSSIFDLGAYFRPLPPPSNTEKVEAKGGDGGASWDDGGFDGIRNIYIGHNKMGIAFVKFLYDKDSQIVVGDDHGSNTLLRVDEFELEHPGEYLISVEGSYDVVDGSESEVIRMLRFKTNLRTSQLFGHETTPSFILEKECHKIVGFHGKIGKMLHQIGVNVLPITD.

4 consecutive Jacalin-type lectin domains span residues M1 to W87, P90 to T232, L235 to P378, and T385 to P528.

The protein belongs to the jacalin lectin family.

The protein is Jacalin-related lectin 16 (JAL16) of Arabidopsis thaliana (Mouse-ear cress).